The sequence spans 1441 residues: ABC transporter G family member 41 (1441 aa).

Over residues 1–14 the composition is skewed to basic and acidic residues; that stretch reads MEDKKQQQQQQREE. A disordered region spans residues 1–28; sequence MEDKKQQQQQQREEAEAEEEAPVVPSSL. Residues 159-432 enclose the ABC transporter 1 domain; the sequence is ATARGLSRRP…FESCGFKCPE (274 aa). 192–199 contributes to the ATP binding site; it reads GPPGCGKT. The ABC transmembrane type-2 1 domain maps to 510-722; it reads DLLKACFARE…AEIGLTGNEF (213 aa). The next 6 membrane-spanning stretches (helical) occupy residues 528 to 548, 566 to 586, 600 to 620, 642 to 662, 672 to 692, and 758 to 778; these read FIYI…GTVF, SLFY…AIAV, FYPA…LSLV, FFCQ…LFRC, ASSV…GFII, and ASAL…GLTI. Residues 838 to 1090 enclose the ABC transporter 2 domain; sequence ISFQDVNYYV…NVIHYFETIP (253 aa). ATP is bound at residue 883–890; the sequence is GVTGAGKT. One can recognise an ABC transmembrane type-2 2 domain in the interval 1163–1379; that stretch reads EQLKACIWKQ…TLNVFFTTQF (217 aa). 7 helical membrane passes run 1187–1207, 1215–1235, 1272–1292, 1300–1320, 1329–1349, 1357–1377, and 1413–1433; these read ILFI…QGDI, GLFT…INNC, IPYV…MIGY, FWFM…GMMI, VASI…GFIV, WWIW…FFTT, and LAAI…GLSI.

The protein belongs to the ABC transporter superfamily. ABCG family. PDR (TC 3.A.1.205) subfamily.

It localises to the membrane. May be a general defense protein. This chain is ABC transporter G family member 41, found in Oryza sativa subsp. japonica (Rice).